Reading from the N-terminus, the 610-residue chain is Elongation factor 4 (610 aa).

The 183-residue stretch at 11–193 (EKIRNFSIIA…QIVEKVPAPT (183 aa)) folds into the tr-type G domain. GTP-binding positions include 23 to 28 (DHGKST) and 140 to 143 (NKID).

The protein belongs to the TRAFAC class translation factor GTPase superfamily. Classic translation factor GTPase family. LepA subfamily.

It localises to the cell membrane. The catalysed reaction is GTP + H2O = GDP + phosphate + H(+). Functionally, required for accurate and efficient protein synthesis under certain stress conditions. May act as a fidelity factor of the translation reaction, by catalyzing a one-codon backward translocation of tRNAs on improperly translocated ribosomes. Back-translocation proceeds from a post-translocation (POST) complex to a pre-translocation (PRE) complex, thus giving elongation factor G a second chance to translocate the tRNAs correctly. Binds to ribosomes in a GTP-dependent manner. The polypeptide is Elongation factor 4 (Streptococcus pyogenes serotype M49 (strain NZ131)).